The following is a 318-amino-acid chain: Deoxyribose-phosphate aldolase (318 aa).

D155 serves as the catalytic Proton donor/acceptor. K218 serves as the catalytic Schiff-base intermediate with acetaldehyde. K254 (proton donor/acceptor) is an active-site residue.

It belongs to the DeoC/FbaB aldolase family. DeoC type 2 subfamily. As to quaternary structure, interacts with YBX1.

The protein resides in the cytoplasm. It localises to the cytoplasmic granule. The protein localises to the nucleus. It carries out the reaction 2-deoxy-D-ribose 5-phosphate = D-glyceraldehyde 3-phosphate + acetaldehyde. The protein operates within carbohydrate degradation; 2-deoxy-D-ribose 1-phosphate degradation; D-glyceraldehyde 3-phosphate and acetaldehyde from 2-deoxy-alpha-D-ribose 1-phosphate: step 2/2. In terms of biological role, catalyzes a reversible aldol reaction between acetaldehyde and D-glyceraldehyde 3-phosphate to generate 2-deoxy-D-ribose 5-phosphate. Participates in stress granule (SG) assembly. May allow ATP production from extracellular deoxyinosine in conditions of energy deprivation. The protein is Deoxyribose-phosphate aldolase (DERA) of Bos taurus (Bovine).